The sequence spans 921 residues: Isoleucine--tRNA ligase (921 aa).

The short motif at 57–67 (PYANGELHMGH) is the 'HIGH' region element. Glu-552 is an L-isoleucyl-5'-AMP binding site. The 'KMSKS' region motif lies at 593–597 (KMSKS). Lys-596 is an ATP binding site. 4 residues coordinate Zn(2+): Cys-888, Cys-891, Cys-908, and Cys-911.

The protein belongs to the class-I aminoacyl-tRNA synthetase family. IleS type 1 subfamily. As to quaternary structure, monomer. Zn(2+) serves as cofactor.

It localises to the cytoplasm. It catalyses the reaction tRNA(Ile) + L-isoleucine + ATP = L-isoleucyl-tRNA(Ile) + AMP + diphosphate. Functionally, catalyzes the attachment of isoleucine to tRNA(Ile). As IleRS can inadvertently accommodate and process structurally similar amino acids such as valine, to avoid such errors it has two additional distinct tRNA(Ile)-dependent editing activities. One activity is designated as 'pretransfer' editing and involves the hydrolysis of activated Val-AMP. The other activity is designated 'posttransfer' editing and involves deacylation of mischarged Val-tRNA(Ile). This Listeria welshimeri serovar 6b (strain ATCC 35897 / DSM 20650 / CCUG 15529 / CIP 8149 / NCTC 11857 / SLCC 5334 / V8) protein is Isoleucine--tRNA ligase.